The primary structure comprises 66 residues: Beta-defensin 107A (66 aa).

The N-terminal stretch at 1–22 is a signal peptide; sequence MKIFFFIFAALILLAQIFQART. Disulfide bonds link Cys37–Cys51 and Cys41–Cys60.

This sequence belongs to the beta-defensin family.

The protein localises to the secreted. Functionally, has antibacterial activity. The sequence is that of Beta-defensin 107A (DEFB107A) from Macaca fascicularis (Crab-eating macaque).